A 210-amino-acid polypeptide reads, in one-letter code: Dephospho-CoA kinase (210 aa).

The region spanning 4–202 is the DPCK domain; sequence WVGLTGGIGS…AFYSGIFASK (199 aa). Residue 12 to 17 participates in ATP binding; it reads GSGKSA.

This sequence belongs to the CoaE family.

It is found in the cytoplasm. The enzyme catalyses 3'-dephospho-CoA + ATP = ADP + CoA + H(+). It participates in cofactor biosynthesis; coenzyme A biosynthesis; CoA from (R)-pantothenate: step 5/5. Functionally, catalyzes the phosphorylation of the 3'-hydroxyl group of dephosphocoenzyme A to form coenzyme A. The chain is Dephospho-CoA kinase from Neisseria gonorrhoeae (strain ATCC 700825 / FA 1090).